Consider the following 794-residue polypeptide: EVI5-like protein (794 aa).

Residues 1-30 (MASPTLSPDSSSQEALSAPTCSPTSDSENL) are compositionally biased toward polar residues. Disordered stretches follow at residues 1 to 36 (MASPTLSPDSSSQEALSAPTCSPTSDSENLSPDELE) and 49 to 75 (EADSKSMRSMNGSRRNSGSSLVSSSSA). Over residues 55–75 (MRSMNGSRRNSGSSLVSSSSA) the composition is skewed to low complexity. The Rab-GAP TBC domain occupies 115–300 (GIPHHFRAIV…RVFDIFMYEG (186 aa)). Coiled-coil stretches lie at residues 358 to 449 (KKMK…QQEN) and 569 to 709 (EAQA…LKGP). Position 685 is a phosphoserine (serine 685). The disordered stretch occupies residues 766–794 (LERPAKDSEGSSDSDADELAAPYSQGLDN).

May interact with RAB10.

Functionally, functions as a GTPase-activating protein (GAP) with a broad specificity. The chain is EVI5-like protein (EVI5L) from Homo sapiens (Human).